The primary structure comprises 399 residues: Brefeldin A resistance protein (399 aa).

3 stretches are compositionally biased toward basic and acidic residues: residues 1–31 (MTSKMENNKDESISTKNALEEKSNETKDETS), 49–69 (SKSEPLEDKGNAEVKEFKETT), and 101–130 (KVEEKELKVNKDVDENEGHVAVETGKKESA). Disordered stretches follow at residues 1–173 (MTSK…FGAF) and 191–269 (KKFA…SEII). Residues 138–157 (SPFSQFASFSNASSPFSNVS) show a composition bias toward low complexity. 2 stretches are compositionally biased toward basic and acidic residues: residues 205 to 217 (SGKEKENDKKSSE) and 241 to 252 (TKSEPKEADKGS). The segment covering 253-263 (GDSTKSTMHQL) has biased composition (polar residues). Positions 256–396 (TKSTMHQLSD…VLEAIPKGGR (141 aa)) constitute a RanBD1 domain.

In terms of processing, phosphorylated.

The protein resides in the nucleus. The protein is Brefeldin A resistance protein (hba1) of Schizosaccharomyces pombe (strain 972 / ATCC 24843) (Fission yeast).